The following is a 193-amino-acid chain: Bcl-2-binding component 3 (193 aa).

Disordered regions lie at residues 1 to 32 (MARARQEGSSPEPVEGLARDSPRPFPLGRLMP) and 71 to 131 (ALGG…VEEE). Phosphoserine is present on Ser-10. A BH3 motif is present at residues 137 to 151 (IGAQLRRMADDLNAQ).

The protein belongs to the Bcl-2 family. In terms of assembly, interacts with MCL1 and BCL2A1. Interacts (via BH3 domain) with BCL2 and BCL2L1/BCL-XL. Interacts (via BH3 domain) with NOL3/ARC (via CARD domain); this interaction prevents BBC3 association with BCL2 and results in CASP8 activation.

The protein resides in the mitochondrion. Its function is as follows. Essential mediator of p53/TP53-dependent and p53/TP53-independent apoptosis. Promotes partial unfolding of BCL2L1 and dissociation of BCL2L1 from p53/TP53, releasing the bound p53/TP53 to induce apoptosis. Regulates ER stress-induced neuronal apoptosis. The sequence is that of Bcl-2-binding component 3 (Bbc3) from Rattus norvegicus (Rat).